The sequence spans 620 residues: Bicaudal D-related protein homolog (620 aa).

Residues 23–41 are compositionally biased toward low complexity; that stretch reads NNNNNSIVGGSSSSSSGGN. The segment at 23-53 is disordered; sequence NNNNNSIVGGSSSSSSGGNKSKRPRQFGQYS. 2 coiled-coil regions span residues 120–331 and 461–575; these read AAEL…LSER and VLEQ…LIDE. Basic and acidic residues-rich tracts occupy residues 493–503 and 509–528; these read KEERDQARGDL and RDEL…DRRT. A disordered region spans residues 493–528; sequence KEERDQARGDLEDNTDRDELLSKAQTERDAANDRRT.

This sequence belongs to the BICDR family. As to quaternary structure, may homodimerize but does not interact with BicD. May interact with eEF1gamma; The interaction is probably indirect.

Its function is as follows. Functions redundantly with BicD. Involved in formation and/or development of mechanosensory organs during metamorphosis. During macrochaetae development, together with BicD, involved in Rab 6 and Spn-F stability and distribution and actin cytoskeleton organization. This Drosophila melanogaster (Fruit fly) protein is Bicaudal D-related protein homolog.